The following is an 87-amino-acid chain: HssA/B-like protein 58 (87 aa).

Residues 1 to 13 show a composition bias toward polar residues; it reads MTILSAITSISRP. Residues 1-31 are disordered; that stretch reads MTILSAITSISRPNKSSKSVISSNGGSSLSM. A compositionally biased stretch (low complexity) spans 14 to 31; that stretch reads NKSSKSVISSNGGSSLSM.

It belongs to the hssA/B family.

This Dictyostelium discoideum (Social amoeba) protein is HssA/B-like protein 58 (hssl58).